A 333-amino-acid chain; its full sequence is Fructose-1,6-bisphosphatase class 1 (333 aa).

4 residues coordinate Mg(2+): glutamate 92, aspartate 113, leucine 115, and aspartate 116. Residues 116-119, asparagine 209, tyrosine 242, and lysine 272 contribute to the substrate site; that span reads DGSS. Glutamate 278 contacts Mg(2+).

This sequence belongs to the FBPase class 1 family. As to quaternary structure, homotetramer. Requires Mg(2+) as cofactor.

It is found in the cytoplasm. It carries out the reaction beta-D-fructose 1,6-bisphosphate + H2O = beta-D-fructose 6-phosphate + phosphate. The protein operates within carbohydrate biosynthesis; Calvin cycle. This chain is Fructose-1,6-bisphosphatase class 1, found in Chlorobium chlorochromatii (strain CaD3).